A 614-amino-acid chain; its full sequence is MAKKNIKQKKDNRIAIDVKKHIKKVDVGVFGGTFVFTSPLSIAELAPKLNKSTNEIIMRYFKKGVVYNLNTILDEEQIGELCLEYDLDFKIEKNVNTENLLENIAFDDLEADLVARAPIVTIMGHVDHGKTTLLDTIRKSSVTASEAGGITQHIGAYQILKGDKPITFIDTPGHEAFTEMRARGANLTDIVILVVAADDGIKMQTEEAIDHAKAANVPIIVFVNKMDKYEANPDKVLNQLSAKEIVAEELGGDIVFVKGSALKNEGIFELLDSILLIAELNDYKANPNRLAYGTTIEANLDKGHGPLATLLVQNGTLRKGDYLVVGSTYGKIRNMFDEYDNEIEMALPSKPVKVSGFEEVPTAGDKFLALADEKQARAIANDVKQKKIRLERSMLQSSDIRAKIANGELKNINLIIKADVQGSLEALKGIFNSINIEGVTTTLVRSAIGTISESDVRLAQTSDAIIIGFNVRANRIIKDLADSVGVQIMNYDIIYKFKEDLEAWMKGTLDPIIVEEVIGEAKVLKLFKHSQVGTICGCRVINGKIKRNALVRVLRDGIVIYNSKIATLQHNKDSVNEVIADKECGLTIANFNDVKENDIIEVYVKVEKNHDEVK.

The region spanning 115–283 (ARAPIVTIMG…ILLIAELNDY (169 aa)) is the tr-type G domain. Positions 124 to 131 (GHVDHGKT) are G1. GTP is bound at residue 124 to 131 (GHVDHGKT). The tract at residues 149 to 153 (GITQH) is G2. A G3 region spans residues 170-173 (DTPG). GTP is bound by residues 170–174 (DTPGH) and 224–227 (NKMD). The tract at residues 224–227 (NKMD) is G4. Positions 260–262 (SAL) are G5.

Belongs to the TRAFAC class translation factor GTPase superfamily. Classic translation factor GTPase family. IF-2 subfamily.

The protein resides in the cytoplasm. Functionally, one of the essential components for the initiation of protein synthesis. Protects formylmethionyl-tRNA from spontaneous hydrolysis and promotes its binding to the 30S ribosomal subunits. Also involved in the hydrolysis of GTP during the formation of the 70S ribosomal complex. The chain is Translation initiation factor IF-2 from Ureaplasma urealyticum serovar 10 (strain ATCC 33699 / Western).